The sequence spans 204 residues: Probable nicotinate-nucleotide adenylyltransferase (204 aa).

It belongs to the NadD family.

The enzyme catalyses nicotinate beta-D-ribonucleotide + ATP + H(+) = deamido-NAD(+) + diphosphate. Its pathway is cofactor biosynthesis; NAD(+) biosynthesis; deamido-NAD(+) from nicotinate D-ribonucleotide: step 1/1. Catalyzes the reversible adenylation of nicotinate mononucleotide (NaMN) to nicotinic acid adenine dinucleotide (NaAD). The chain is Probable nicotinate-nucleotide adenylyltransferase from Dehalococcoides mccartyi (strain CBDB1).